Reading from the N-terminus, the 359-residue chain is Nicotinate-nucleotide--dimethylbenzimidazole phosphoribosyltransferase (359 aa).

Catalysis depends on Glu318, which acts as the Proton acceptor.

Belongs to the CobT family. Homodimer.

The enzyme catalyses 5,6-dimethylbenzimidazole + nicotinate beta-D-ribonucleotide = alpha-ribazole 5'-phosphate + nicotinate + H(+). Its pathway is nucleoside biosynthesis; alpha-ribazole biosynthesis; alpha-ribazole from 5,6-dimethylbenzimidazole: step 1/2. In terms of biological role, catalyzes the synthesis of alpha-ribazole-5'-phosphate from nicotinate mononucleotide (NAMN) and 5,6-dimethylbenzimidazole (DMB). This is Nicotinate-nucleotide--dimethylbenzimidazole phosphoribosyltransferase from Escherichia coli (strain ATCC 8739 / DSM 1576 / NBRC 3972 / NCIMB 8545 / WDCM 00012 / Crooks).